We begin with the raw amino-acid sequence, 528 residues long: Calcium-dependent protein kinase 13 (528 aa).

Residue G2 is the site of N-myristoyl glycine attachment. A compositionally biased stretch (basic and acidic residues) spans 17–32; that stretch reads KSNYSGHDHARKDAAG. Positions 17–37 are disordered; that stretch reads KSNYSGHDHARKDAAGGKKSA. Position 43 is a phosphoserine (S43). One can recognise a Protein kinase domain in the interval 54–312; it reads YLLDRELGRG…AKQVLEHPWI (259 aa). ATP-binding positions include 60 to 68 and K83; that span reads LGRGEFGVT. The active-site Proton acceptor is D178. The residue at position 218 (S218) is a Phosphoserine. The tract at residues 318–348 is autoinhibitory domain; it reads APNVPLGDVVKSRLKQFSVMNRFKRKALRVI. 4 consecutive EF-hand domains span residues 355–390, 391–426, 427–462, and 463–498; these read EEVE…FSTQ, LAES…LQKV, ANDE…DGGD, and DCVD…GTDW. 16 residues coordinate Ca(2+): D368, D370, D372, E379, D404, T410, E415, D440, D442, N444, Y446, E451, D476, D478, D480, and R482. S484 carries the post-translational modification Phosphoserine. Residue E487 participates in Ca(2+) binding. Position 522 is a phosphoserine (S522).

This sequence belongs to the protein kinase superfamily. Ser/Thr protein kinase family. CDPK subfamily.

It localises to the cell membrane. It carries out the reaction L-seryl-[protein] + ATP = O-phospho-L-seryl-[protein] + ADP + H(+). The catalysed reaction is L-threonyl-[protein] + ATP = O-phospho-L-threonyl-[protein] + ADP + H(+). Activated by calcium. Autophosphorylation may play an important role in the regulation of the kinase activity. Its function is as follows. May play a role in signal transduction pathways that involve calcium as a second messenger. The sequence is that of Calcium-dependent protein kinase 13 (CPK13) from Arabidopsis thaliana (Mouse-ear cress).